The chain runs to 550 residues: MFCVQCEQTIRTPVGNGCSYAQGMCGKTAETSDLQDLLVAVLQGLSAWALKARELDIIDHDVDNFAPRAFFSTLTNVNFDSQRIIGYAQEAITLRESLAVRCRLHDATATVDHPMAALQLAGNDIPTLLQQAADFALDSDKAIVGDDVHGLRMLNLYGLKGAAAYMEHAHVLGQYDDAIYAEYHAFMAWLGTQPSDVDTLLNNAMGIGKMNFNVMAILDRGETDAYGNPQPTAVNVRPIAGKAILISGHDLKDLRMLLEQTEGTGVNIYTHGEMLPAHGYPELKKFKHLAGNYGSGWQNQQTEFAKFPGAIVMTSNCIIDPNVGNYGDRIWTRSIVGWPGVNHLEGDDFSPVIEQAQSLAGFPYSEIEHMITVGFGRETLLSAADTVIDLVAQKKLRHVFLVGGCDGSREERSYFTDFTLNVPQDCLIMTLACGKYRFNKLDFGTLEGLPRLLDVGQCNDAYSAIILAVKLAEKLGCGVNDLPLSLVLSWFEQKAIVILLTLLSLGVKNIYTGPTAPGFLTDNLLAILNEKFGMRAITTVEQDMNTILAA.

4 residues coordinate [2Fe-2S] cluster: Cys-3, Cys-6, Cys-18, and Cys-25. Hybrid [4Fe-2O-2S] cluster is bound by residues His-249, Glu-273, Cys-317, Cys-405, Cys-433, Cys-458, Glu-492, and Lys-494. Cys-405 is subject to Cysteine persulfide.

It belongs to the HCP family. The cofactor is [2Fe-2S] cluster. Hybrid [4Fe-2O-2S] cluster is required as a cofactor.

It is found in the cytoplasm. It carries out the reaction A + NH4(+) + H2O = hydroxylamine + AH2 + H(+). Its function is as follows. Catalyzes the reduction of hydroxylamine to form NH(3) and H(2)O. The protein is Hydroxylamine reductase of Pectobacterium carotovorum subsp. carotovorum (strain PC1).